Consider the following 301-residue polypeptide: Cytidine deaminase 1 (301 aa).

2 consecutive CMP/dCMP-type deaminase domains span residues 23–156 (SVIQ…FGPD) and 188–301 (DSSA…CYEA). 64–66 (NVE) lines the substrate pocket. His-77 serves as a coordination point for Zn(2+). Residue Glu-79 is the Proton donor of the active site. Residues Cys-104 and Cys-107 each contribute to the Zn(2+) site.

Belongs to the cytidine and deoxycytidylate deaminase family. In terms of assembly, homodimer. Requires Zn(2+) as cofactor. In terms of tissue distribution, expressed in roots, rosette leaves, stems and flowers.

The catalysed reaction is cytidine + H2O + H(+) = uridine + NH4(+). It carries out the reaction 2'-deoxycytidine + H2O + H(+) = 2'-deoxyuridine + NH4(+). Inhibited by uridine, CMP and dCMP. In terms of biological role, this enzyme scavenges exogenous and endogenous cytidine and 2'-deoxycytidine for UMP synthesis. Functions as a conventional cytidine deaminase. Has no affinity for RNA and is not involved in RNA-editing by C-to-U deamination. In Arabidopsis thaliana (Mouse-ear cress), this protein is Cytidine deaminase 1 (CDA1).